The primary structure comprises 29 residues: Beta-theraphotoxin-Gr1b (29 aa).

3 disulfide bridges follow: Cys-2–Cys-16, Cys-9–Cys-21, and Cys-15–Cys-25. Leu-29 is modified (leucine amide).

The protein belongs to the neurotoxin 30 (phrixotoxin) family. As to expression, expressed by the venom gland.

It is found in the secreted. In terms of biological role, inhibits the voltage-gated sodium channels Nav1.1/SCN1A (IC(50)=360 nM), Nav1.2/SCN2A (IC(50)=600 nM), Nav1.3/SCN3A (IC(50)=1280), Nav1.4/SCN4A (IC(50)=330 nM), Nav1.6/SCN8A (IC(50)=1200 nM), Nav1.7/SCN9A (IC(50)=1-40 nM), and voltage-gated potassium channels Kv11.1/KCNH2 (IC(50)=4.8 uM). Induces analgesia in mammals. This analgesia is mediated by a non-opioid receptor related mechanism. The sequence is that of Beta-theraphotoxin-Gr1b from Grammostola rosea (Chilean rose tarantula).